The chain runs to 428 residues: GTPase Obg (428 aa).

The 158-residue stretch at 1–158 folds into the Obg domain; the sequence is MFVDQVKIYV…RDVILELKVL (158 aa). Residues 159-329 enclose the OBG-type G domain; it reads ADVGLVGFPS…LLFEVANLIE (171 aa). Residues 165-172, 190-194, 212-215, 282-285, and 310-312 each bind GTP; these read GFPSVGKS, FTTIV, DLPG, NKMD, and SAV. 2 residues coordinate Mg(2+): Ser-172 and Thr-192. In terms of domain architecture, OCT spans 350–428; the sequence is KFDTEGVKFE…ILEYEFEFID (79 aa).

It belongs to the TRAFAC class OBG-HflX-like GTPase superfamily. OBG GTPase family. Monomer. Mg(2+) serves as cofactor.

The protein localises to the cytoplasm. In terms of biological role, an essential GTPase which binds GTP, GDP and possibly (p)ppGpp with moderate affinity, with high nucleotide exchange rates and a fairly low GTP hydrolysis rate. Plays a role in control of the cell cycle, stress response, ribosome biogenesis and in those bacteria that undergo differentiation, in morphogenesis control. In Bacillus cereus (strain B4264), this protein is GTPase Obg.